Reading from the N-terminus, the 225-residue chain is NAD(P)H-quinone oxidoreductase subunit K, chloroplastic (225 aa).

C43, C44, C108, and C139 together coordinate [4Fe-4S] cluster.

Belongs to the complex I 20 kDa subunit family. As to quaternary structure, NDH is composed of at least 16 different subunits, 5 of which are encoded in the nucleus. It depends on [4Fe-4S] cluster as a cofactor.

The protein localises to the plastid. It is found in the chloroplast thylakoid membrane. The catalysed reaction is a plastoquinone + NADH + (n+1) H(+)(in) = a plastoquinol + NAD(+) + n H(+)(out). The enzyme catalyses a plastoquinone + NADPH + (n+1) H(+)(in) = a plastoquinol + NADP(+) + n H(+)(out). In terms of biological role, NDH shuttles electrons from NAD(P)H:plastoquinone, via FMN and iron-sulfur (Fe-S) centers, to quinones in the photosynthetic chain and possibly in a chloroplast respiratory chain. The immediate electron acceptor for the enzyme in this species is believed to be plastoquinone. Couples the redox reaction to proton translocation, and thus conserves the redox energy in a proton gradient. In Amborella trichopoda, this protein is NAD(P)H-quinone oxidoreductase subunit K, chloroplastic.